Consider the following 329-residue polypeptide: Protein Brevis radix-like 4 (329 aa).

The disordered stretch occupies residues 12–37; sequence SGTSRHHGQQRRGGSPPPRGRTTSVY. A BRX 1 domain is found at 86-142; the sequence is REWVAQVEPGVQITFVSLAGGGGNDLKRIRFSREMYDKWQAQKWWGENNERIMELYN. The segment at 151 to 263 is disordered; sequence LPTPPRSDDG…TTSCSSRDEV (113 aa). Composition is skewed to low complexity over residues 222–236 and 243–252; these read SNPS…QQPQ and AAASDAMDAA. Over residues 253–263 the composition is skewed to polar residues; the sequence is RTTSCSSRDEV. Positions 274-329 constitute a BRX 2 domain; it reads TEWVIQDEPGVYITVRELADGTRELRRVRFSRERFAELNAKLWWEENKERIQAQYL.

The protein belongs to the BRX family.

It is found in the nucleus. This is Protein Brevis radix-like 4 (BRXL4) from Oryza sativa subsp. japonica (Rice).